The chain runs to 429 residues: Alpha-L-rhamnosidase rgxB (429 aa).

An N-terminal signal peptide occupies residues 1 to 20 (MAPIALKILLFTSLIVPSIS). N-linked (GlcNAc...) asparagine glycans are attached at residues Asn67, Asn77, Asn97, Asn103, Asn112, Asn135, and Asn219. A PbH1 1 repeat occupies 217-238 (SKNITLTNWEVVNGDDSISTKA). Asp231 functions as the Proton donor in the catalytic mechanism. N-linked (GlcNAc...) asparagine glycosylation is found at Asn239, Asn247, Asn278, and Asn344. 2 PbH1 repeats span residues 240–260 (STDI…AIGS) and 271–292 (VERL…YFKT). The cysteines at positions 374 and 380 are disulfide-linked. N-linked (GlcNAc...) asparagine glycosylation is found at Asn387, Asn395, and Asn414.

Belongs to the glycosyl hydrolase 28 family.

Its subcellular location is the secreted. It carries out the reaction Hydrolysis of terminal non-reducing alpha-L-rhamnose residues in alpha-L-rhamnosides.. Alpha-L-rhamnosidase which is able to degrade p-nitrophenyl-alpha-L-rhamnopyranoside (pnp_Rha). The natural substrate of this enzyme has not been identified yet. The polypeptide is Alpha-L-rhamnosidase rgxB (rgxB) (Aspergillus niger (strain ATCC MYA-4892 / CBS 513.88 / FGSC A1513)).